Consider the following 339-residue polypeptide: Ketol-acid reductoisomerase (NADP(+)) (339 aa).

A KARI N-terminal Rossmann domain is found at 1 to 182 (MRVYYDRDAD…GGGRSGIIET (182 aa)). NADP(+)-binding positions include 24–27 (YGSQ), R48, S51, S53, and 83–86 (DELQ). H108 is an active-site residue. An NADP(+)-binding site is contributed by G134. The region spanning 183–328 (TFREECETDL…EKLRGMMPWI (146 aa)) is the KARI C-terminal knotted domain. Mg(2+) contacts are provided by D191, E195, E227, and E231. Substrate is bound at residue S252.

This sequence belongs to the ketol-acid reductoisomerase family. It depends on Mg(2+) as a cofactor.

The enzyme catalyses (2R)-2,3-dihydroxy-3-methylbutanoate + NADP(+) = (2S)-2-acetolactate + NADPH + H(+). It carries out the reaction (2R,3R)-2,3-dihydroxy-3-methylpentanoate + NADP(+) = (S)-2-ethyl-2-hydroxy-3-oxobutanoate + NADPH + H(+). The protein operates within amino-acid biosynthesis; L-isoleucine biosynthesis; L-isoleucine from 2-oxobutanoate: step 2/4. It functions in the pathway amino-acid biosynthesis; L-valine biosynthesis; L-valine from pyruvate: step 2/4. In terms of biological role, involved in the biosynthesis of branched-chain amino acids (BCAA). Catalyzes an alkyl-migration followed by a ketol-acid reduction of (S)-2-acetolactate (S2AL) to yield (R)-2,3-dihydroxy-isovalerate. In the isomerase reaction, S2AL is rearranged via a Mg-dependent methyl migration to produce 3-hydroxy-3-methyl-2-ketobutyrate (HMKB). In the reductase reaction, this 2-ketoacid undergoes a metal-dependent reduction by NADPH to yield (R)-2,3-dihydroxy-isovalerate. This Magnetospirillum molischianum (Rhodospirillum molischianum) protein is Ketol-acid reductoisomerase (NADP(+)).